The chain runs to 432 residues: Glutamate-1-semialdehyde 2,1-aminomutase (432 aa).

Lys-267 is modified (N6-(pyridoxal phosphate)lysine).

Belongs to the class-III pyridoxal-phosphate-dependent aminotransferase family. HemL subfamily. In terms of assembly, homodimer. The cofactor is pyridoxal 5'-phosphate.

It is found in the cytoplasm. The enzyme catalyses (S)-4-amino-5-oxopentanoate = 5-aminolevulinate. The protein operates within porphyrin-containing compound metabolism; protoporphyrin-IX biosynthesis; 5-aminolevulinate from L-glutamyl-tRNA(Glu): step 2/2. The sequence is that of Glutamate-1-semialdehyde 2,1-aminomutase from Syntrophus aciditrophicus (strain SB).